The primary structure comprises 235 residues: uncharacterized protein (235 aa).

The N-acetyltransferase domain occupies 82-221 (LAFKKFPPDP…DTGELIRESP (140 aa)).

The protein belongs to the acetyltransferase family.

It localises to the golgi apparatus membrane. The protein localises to the endoplasmic reticulum membrane. This is an uncharacterized protein from Schizosaccharomyces pombe (strain 972 / ATCC 24843) (Fission yeast).